The primary structure comprises 2845 residues: Multiple epidermal growth factor-like domains protein 8 (2845 aa).

Positions 1–27 are cleaved as a signal peptide; sequence MALGKVLAMALVLALAVLGSLSPGARA. The Extracellular segment spans residues 28–2647; that stretch reads GDCKGQRQVL…FFRQDQAHID (2620 aa). Disulfide bonds link cysteine 30-cysteine 57, cysteine 142-cysteine 152, cysteine 146-cysteine 158, cysteine 174-cysteine 184, cysteine 178-cysteine 191, and cysteine 193-cysteine 202. Positions 30-140 constitute a CUB 1 domain; that stretch reads CKGQRQVLRE…LGFNASFRFS (111 aa). Residue asparagine 50 is glycosylated (N-linked (GlcNAc...) asparagine). 2 EGF-like domains span residues 138 to 168 and 170 to 203; these read RFSL…GGPD and GLQE…RACD. Asparagine 217 is a glycosylation site (N-linked (GlcNAc...) asparagine). Kelch repeat units follow at residues 241 to 287, 290 to 338, 346 to 399, 402 to 453, 459 to 511, and 525 to 575; these read LLAV…AVAW, SLVL…AGHA, WLYV…FHAP, ALLV…FHTA, YMVV…APPS, and VLLV…SRDP. PSI domains follow at residues 561 to 613, 847 to 899, and 900 to 947; these read YCSM…GDCQ, SCTS…TLCP, and LCEE…EECP. The N-linked (GlcNAc...) asparagine glycan is linked to asparagine 1048. Residues 1074–1115 form the EGF-like 3; calcium-binding domain; it reads DVDECRLGLARCHPRATCLNTPLSYECHCQRGYQGDGISHCN. Disulfide bonds link cysteine 1078-cysteine 1091, cysteine 1085-cysteine 1100, cysteine 1102-cysteine 1114, cysteine 1163-cysteine 1171, cysteine 1165-cysteine 1179, cysteine 1182-cysteine 1191, cysteine 1194-cysteine 1208, cysteine 1211-cysteine 1224, cysteine 1213-cysteine 1231, cysteine 1233-cysteine 1242, cysteine 1245-cysteine 1259, cysteine 1263-cysteine 1302, cysteine 1336-cysteine 1367, cysteine 1407-cysteine 1421, cysteine 1415-cysteine 1433, and cysteine 1435-cysteine 1444. Laminin EGF-like domains lie at 1163 to 1210 and 1211 to 1261; these read CGCS…GCRP and CQCN…SCFR. Residues 1263–1405 enclose the CUB 2 domain; it reads CGGRALLTNV…WGFNASVGSA (143 aa). Asparagine 1271 is a glycosylation site (N-linked (GlcNAc...) asparagine). The residue at position 1353 (threonine 1353) is a Phosphothreonine. An EGF-like 4 domain is found at 1403–1445; that stretch reads GSARCGSGGPGSCPVPQECVPQDGAAGAGLCRCPQGWAGPHCR. Kelch repeat units lie at residues 1522 to 1570, 1580 to 1626, 1632 to 1679, 1685 to 1735, 1796 to 1843, and 1852 to 1898; these read TLWM…SFHA, AMYL…HTLT, SLLL…SAVY, SLYV…VRGS, TMVV…ESVA, and RLYI…CHGA. A disordered region spans residues 1726 to 1745; the sequence is RDRMRNVRGSSRGLGQVPGE. 4 PSI domains span residues 1876-1916, 1924-1979, 2060-2118, and 2120-2177; these read PCRL…SPCS, ECRR…NDCR, PCHL…ESCS, and GCAQ…LSCP. The N-linked (GlcNAc...) asparagine glycan is linked to asparagine 2066. In terms of domain architecture, EGF-like 5 spans 2178–2216; sequence PEDECANGHHDCNETQNCHDQPHGYECSCKTGYTMDNMT. 2 disulfides stabilise this stretch: cysteine 2182–cysteine 2195 and cysteine 2189–cysteine 2204. Asparagine 2229 is a glycosylation site (N-linked (GlcNAc...) asparagine). Intrachain disulfides connect cysteine 2253–cysteine 2261, cysteine 2255–cysteine 2270, cysteine 2273–cysteine 2282, cysteine 2285–cysteine 2299, cysteine 2380–cysteine 2389, cysteine 2382–cysteine 2397, cysteine 2399–cysteine 2424, and cysteine 2427–cysteine 2441. 2 consecutive Laminin EGF-like domains span residues 2253–2301 and 2380–2443; these read CRCN…TCRP and CQCN…QCYR. A disordered region spans residues 2523-2564; the sequence is TVHIQPPPAPPPPPPPADGGPRGAGDPGGAGASSGPGAPAEP. A compositionally biased stretch (pro residues) spans 2527–2540; sequence QPPPAPPPPPPPAD. Over residues 2542-2556 the composition is skewed to gly residues; the sequence is GPRGAGDPGGAGASS. Residues 2648–2668 traverse the membrane as a helical segment; the sequence is LFVFFSVFFSCFFLFLSLCVL. Residues 2669 to 2845 lie on the Cytoplasmic side of the membrane; the sequence is LWKAKQALDQ…SQDNLTSMSL (177 aa). Positions 2817-2831 are enriched in gly residues; the sequence is GGGAGGSGHGTGAGR. The disordered stretch occupies residues 2817–2845; the sequence is GGGAGGSGHGTGAGRKGLLSQDNLTSMSL. The segment covering 2836–2845 has biased composition (polar residues); it reads SQDNLTSMSL.

It localises to the membrane. Its function is as follows. Acts as a negative regulator of hedgehog signaling. The sequence is that of Multiple epidermal growth factor-like domains protein 8 (MEGF8) from Homo sapiens (Human).